A 200-amino-acid polypeptide reads, in one-letter code: MTDKLATLQSALEKALGNRIQSLTEAVGEITLVVKAADYLETMRTLRDDATLKFEQLIDLCGVDYSAYGDGAWNGPRFAAVSHLLSVTHNWRVRVRVFAPDDDLPVVASVVDVWNAADWFEREAFDLYGLVFEGHPDLRRILTDYGFIGHPFRKDFPVSGYVEMRYDPVQRRVIYQPVTIEPREITPRVIREDQYGGLKH.

It belongs to the complex I 30 kDa subunit family. NDH-1 is composed of 14 different subunits. Subunits NuoB, C, D, E, F, and G constitute the peripheral sector of the complex.

It is found in the cell inner membrane. The enzyme catalyses a quinone + NADH + 5 H(+)(in) = a quinol + NAD(+) + 4 H(+)(out). Its function is as follows. NDH-1 shuttles electrons from NADH, via FMN and iron-sulfur (Fe-S) centers, to quinones in the respiratory chain. The immediate electron acceptor for the enzyme in this species is believed to be ubiquinone. Couples the redox reaction to proton translocation (for every two electrons transferred, four hydrogen ions are translocated across the cytoplasmic membrane), and thus conserves the redox energy in a proton gradient. The chain is NADH-quinone oxidoreductase subunit C from Ralstonia nicotianae (strain ATCC BAA-1114 / GMI1000) (Ralstonia solanacearum).